Here is a 1094-residue protein sequence, read N- to C-terminus: Isoleucine--tRNA ligase (1094 aa).

The 'HIGH' region signature appears at 53-63 (PFANGLPHYGH). The 'KMSKS' region signature appears at 624–628 (KLSKR). Lys627 is a binding site for ATP.

This sequence belongs to the class-I aminoacyl-tRNA synthetase family. IleS type 2 subfamily. In terms of assembly, monomer. Zn(2+) serves as cofactor.

It localises to the cytoplasm. The enzyme catalyses tRNA(Ile) + L-isoleucine + ATP = L-isoleucyl-tRNA(Ile) + AMP + diphosphate. Functionally, catalyzes the attachment of isoleucine to tRNA(Ile). As IleRS can inadvertently accommodate and process structurally similar amino acids such as valine, to avoid such errors it has two additional distinct tRNA(Ile)-dependent editing activities. One activity is designated as 'pretransfer' editing and involves the hydrolysis of activated Val-AMP. The other activity is designated 'posttransfer' editing and involves deacylation of mischarged Val-tRNA(Ile). This chain is Isoleucine--tRNA ligase, found in Rickettsia felis (strain ATCC VR-1525 / URRWXCal2) (Rickettsia azadi).